The primary structure comprises 117 residues: uncharacterized protein (117 aa).

It localises to the mitochondrion. This is an uncharacterized protein from Arabidopsis thaliana (Mouse-ear cress).